We begin with the raw amino-acid sequence, 1063 residues long: JmjC domain-containing histone demethylation protein 1 (1063 aa).

Positions 86–266 constitute a JmjC domain; the sequence is LYNVLSLEYS…TQLRVYQVEN (181 aa). Thr160 contributes to the substrate binding site. Fe cation is bound by residues His163 and Asp165. Lys180 serves as a coordination point for substrate. His234 provides a ligand contact to Fe cation. The span at 379 to 389 shows a compositional bias: acidic residues; that stretch reads GLEEEAEDEDV. 3 disordered regions span residues 379–400, 554–750, and 776–1040; these read GLEE…AEER, ESDE…NPYN, and VELH…KRAK. The segment covering 390–400 has biased composition (basic and acidic residues); that stretch reads KPETKKEAEER. Composition is skewed to acidic residues over residues 594 to 605 and 613 to 631; these read PEYDEDMEEYDP and ELEE…EEEY. Over residues 636-646 the composition is skewed to low complexity; it reads TRRSSTRGSAS. Basic and acidic residues-rich tracts occupy residues 647–665, 674–712, 776–806, 813–835, and 892–902; these read TKEE…PKKE, EKSS…ELRA, VELH…HEDS, PYDR…DSHR, and EPRRSNDRRTS. Low complexity predominate over residues 926–937; the sequence is AEAASASSSRHS. Polar residues-rich tracts occupy residues 950 to 963 and 973 to 982; these read LNSS…TPMY and WLPNTSNVTR. Positions 1005-1016 are enriched in pro residues; sequence PPFPRSITPPPV. Over residues 1020–1030 the composition is skewed to polar residues; sequence ELKSQSNGRKS. Residues 1031-1040 show a composition bias toward basic and acidic residues; sequence NYSEDGKRAK.

The protein belongs to the JHDM1 histone demethylase family. Fe(2+) is required as a cofactor.

The protein resides in the nucleus. The catalysed reaction is N(6),N(6)-dimethyl-L-lysyl(36)-[histone H3] + 2 2-oxoglutarate + 2 O2 = L-lysyl(36)-[histone H3] + 2 formaldehyde + 2 succinate + 2 CO2. In terms of biological role, histone demethylase that specifically demethylates 'Lys-36' of histone H3, thereby playing a central role in histone code. The sequence is that of JmjC domain-containing histone demethylation protein 1 (jhdm-1) from Caenorhabditis briggsae.